Reading from the N-terminus, the 278-residue chain is Complement C1q tumor necrosis factor-related protein 6 (278 aa).

An N-terminal signal peptide occupies residues 1 to 46; that stretch reads MQWLRVRESPGEATGHRVTMGTAALGPVWAALLLFLLMCEIPMVEL. A glycan (N-linked (GlcNAc...) asparagine) is linked at Asn-91. Residues 97–138 enclose the Collagen-like domain; the sequence is GDKGDPGPMGLPGYMGREGPQGEPGPQGSKGDKGEMGSPGAP. The tract at residues 99 to 135 is disordered; the sequence is KGDPGPMGLPGYMGREGPQGEPGPQGSKGDKGEMGSP. The 121-residue stretch at 139 to 259 folds into the C1q domain; sequence CQKRFFAFSV…KRQRENAIYS (121 aa).

The protein resides in the secreted. The chain is Complement C1q tumor necrosis factor-related protein 6 (C1QTNF6) from Homo sapiens (Human).